A 336-amino-acid polypeptide reads, in one-letter code: Potassium channel subfamily K member 1 (336 aa).

Over 1-20 the chain is Cytoplasmic; the sequence is MLQSLAGSSCVRLVERHRSA. The chain crosses the membrane as a helical span at residues 21 to 41; it reads WCFGFLVLGYLLYLVFGAVVF. Over 42-103 the chain is Extracellular; sequence SSVELPYEDL…SNASGNWNWD (62 aa). The N-linked (GlcNAc...) asparagine glycan is linked to Asn95. The segment at residues 104–116 is an intramembrane region (helical); that stretch reads FASALFFASTVLS. An intramembrane segment occupies 117–122; the sequence is TTGYGH. The tract at residues 117-122 is selectivity filter 1; sequence TTGYGH. At 123–132 the chain is on the extracellular side; the sequence is TVPLSDGGKA. Residues 133 to 156 form a helical membrane-spanning segment; the sequence is FCIIYSVIGIPFTLLFLTAVVQRV. At 157-181 the chain is on the cytoplasmic side; sequence TVHVTRRPVLYFHVRWGFSKQVVAI. Residues 182-202 traverse the membrane as a helical segment; sequence VHAVLLGLITVSCFFFIPAAV. Residues 203 to 211 are Extracellular-facing; it reads FSVLEDDWN. The segment at residues 212–224 is an intramembrane region (helical); sequence FLESFYFCFISLS. Residues 225-230 form a selectivity filter 2 region; sequence TIGLGD. Residues 225 to 231 lie within the membrane without spanning it; the sequence is TIGLGDY. At 232-243 the chain is on the extracellular side; that stretch reads VPGEGYNQKFRE. The helical transmembrane segment at 244–267 threads the bilayer; sequence LYKIGITCYLLLGLIAMLVVLETF. Over 268-336 the chain is Cytoplasmic; that stretch reads CELHELKKFR…SACADGPANH (69 aa). Lys274 is covalently cross-linked (Glycyl lysine isopeptide (Lys-Gly) (interchain with G-Cter in SUMO)). The important for intracellular retention in recycling endosomes stretch occupies residues 293 to 299; it reads IIEHDQL. Residues 315-336 are disordered; it reads QKQNEPFVATPSSACADGPANH. Position 326 is a phosphoserine (Ser326).

It belongs to the two pore domain potassium channel (TC 1.A.1.8) family. In terms of assembly, homodimer; disulfide-linked. Heterodimer with KCNK2; disulfide-linked. In astrocytes, forms mostly heterodimeric potassium channels with KCNK2, with only a minor proportion of functional channels containing homodimeric KCNK1. Interacts with KCNK3 and KCNK9, forming functional heterodimeric channels. Interacts with GNG4. Identified in a complex with PSD and ARF6; interacts only with PSD that is bound to ARF6. Interacts with UBE2I. Post-translationally, sumoylation is controversial. Sumoylated by UBE2I. Not sumoylated when expressed in xenopus oocytes or mammalian cells. Sumoylation inactivates the channel, but does not interfere with expression at the cell membrane. Sumoylation of a single subunit is sufficient to silence the dimeric channel. Sumoylation of KCNK1 is sufficient to silence heterodimeric channels formed by KCNK1 and KCNK3 or KCNK9. Desumoylated by SENP1; this activates the channel. Desumoylated by SENP1; this strongly increases halothane-mediated activation of heterodimeric channels formed with KCNK9. SENP1 treatment has no effect. Expressed in renal distal tubules, especially in cortical collecting duct and cortical thick ascending limb, with lower levels in the connecting tubule.

Its subcellular location is the cell membrane. It localises to the recycling endosome. The protein resides in the synaptic cell membrane. The protein localises to the cytoplasmic vesicle. It is found in the perikaryon. Its subcellular location is the cell projection. It localises to the dendrite. The protein resides in the apical cell membrane. It catalyses the reaction K(+)(in) = K(+)(out). It carries out the reaction NH4(+)(in) = NH4(+)(out). The catalysed reaction is Na(+)(in) = Na(+)(out). The enzyme catalyses Rb(+)(in) = Rb(+)(out). It catalyses the reaction Cs(+)(in) = Cs(+)(out). It carries out the reaction Li(+)(in) = Li(+)(out). The catalysed reaction is L-glutamate(out) = L-glutamate(in). The enzyme catalyses chloride(in) = chloride(out). In terms of biological role, ion channel that contributes to passive transmembrane potassium transport and to the regulation of the resting membrane potential in brain astrocytes, but also in kidney and in other tissues. Forms dimeric channels through which potassium ions pass in accordance with their electrochemical gradient. The channel is selective for K(+) ions at physiological potassium concentrations and at neutral pH, but becomes permeable to Na(+) at subphysiological K(+) levels and upon acidification of the extracellular medium. The homodimer has very low potassium channel activity, when expressed in heterologous systems, and can function as weakly inward rectifying potassium channel. Channel activity is modulated by activation of serotonin receptors. Heterodimeric channels containing KCNK1 and KCNK2 have much higher activity, and may represent the predominant form in astrocytes. Heterodimeric channels containing KCNK1 and KCNK3 or KCNK9 have much higher activity. Heterodimeric channels formed by KCNK1 and KCNK9 may contribute to halothane-sensitive currents. Mediates outward rectifying potassium currents in dentate gyrus granule cells and contributes to the regulation of their resting membrane potential. Contributes to the regulation of action potential firing in dentate gyrus granule cells and down-regulates their intrinsic excitability. In astrocytes, the heterodimer formed by KCNK1 and KCNK2 is required for rapid glutamate release in response to activation of G-protein coupled receptors, such as F2R and CNR1. Required for normal ion and water transport in the kidney. Contributes to the regulation of the resting membrane potential of pancreatic beta cells. The low channel activity of homodimeric KCNK1 may be due to sumoylation. The low channel activity may be due to rapid internalization from the cell membrane and retention in recycling endosomes. Permeable to monovalent cations with ion selectivity for K(+) &gt; Rb(+) &gt;&gt; NH4(+) &gt;&gt; Cs(+) = Na(+) = Li(+). In Oryctolagus cuniculus (Rabbit), this protein is Potassium channel subfamily K member 1.